Consider the following 429-residue polypeptide: Bifunctional protein GlmU (429 aa).

The segment at 1–223 is pyrophosphorylase; the sequence is MKTSILILAA…EDEFMGINDK (223 aa). UDP-N-acetyl-alpha-D-glucosamine is bound by residues 8–11, Lys22, and 81–82; these read LAAG and GT. Position 102 (Asp102) interacts with Mg(2+). Residues Gly135, Glu149, Asn164, and Asn221 each coordinate UDP-N-acetyl-alpha-D-glucosamine. Asn221 provides a ligand contact to Mg(2+). The tract at residues 224–244 is linker; that stretch reads FELSIAENFMQEKIKKYWMQQ. The segment at 245-429 is N-acetyltransferase; sequence GVIFHLPQST…KDYYYKKFQK (185 aa). 2 residues coordinate UDP-N-acetyl-alpha-D-glucosamine: Arg308 and Lys325. His336 acts as the Proton acceptor in catalysis. UDP-N-acetyl-alpha-D-glucosamine is bound by residues Tyr339 and Asn350. Acetyl-CoA-binding positions include 359 to 360, Ser378, Ala396, and Arg413; that span reads NY.

It in the N-terminal section; belongs to the N-acetylglucosamine-1-phosphate uridyltransferase family. This sequence in the C-terminal section; belongs to the transferase hexapeptide repeat family. In terms of assembly, homotrimer. The cofactor is Mg(2+).

It localises to the cytoplasm. It catalyses the reaction alpha-D-glucosamine 1-phosphate + acetyl-CoA = N-acetyl-alpha-D-glucosamine 1-phosphate + CoA + H(+). The catalysed reaction is N-acetyl-alpha-D-glucosamine 1-phosphate + UTP + H(+) = UDP-N-acetyl-alpha-D-glucosamine + diphosphate. It functions in the pathway nucleotide-sugar biosynthesis; UDP-N-acetyl-alpha-D-glucosamine biosynthesis; N-acetyl-alpha-D-glucosamine 1-phosphate from alpha-D-glucosamine 6-phosphate (route II): step 2/2. Its pathway is nucleotide-sugar biosynthesis; UDP-N-acetyl-alpha-D-glucosamine biosynthesis; UDP-N-acetyl-alpha-D-glucosamine from N-acetyl-alpha-D-glucosamine 1-phosphate: step 1/1. It participates in bacterial outer membrane biogenesis; LPS lipid A biosynthesis. Catalyzes the last two sequential reactions in the de novo biosynthetic pathway for UDP-N-acetylglucosamine (UDP-GlcNAc). The C-terminal domain catalyzes the transfer of acetyl group from acetyl coenzyme A to glucosamine-1-phosphate (GlcN-1-P) to produce N-acetylglucosamine-1-phosphate (GlcNAc-1-P), which is converted into UDP-GlcNAc by the transfer of uridine 5-monophosphate (from uridine 5-triphosphate), a reaction catalyzed by the N-terminal domain. This chain is Bifunctional protein GlmU, found in Campylobacter jejuni subsp. jejuni serotype O:6 (strain 81116 / NCTC 11828).